The chain runs to 310 residues: GMP synthase [glutamine-hydrolyzing] subunit B (310 aa).

Residues 2-185 (FKTEPFIEES…LGLPDQIAHR (184 aa)) enclose the GMPS ATP-PPase domain. Residue 29-35 (SGGVDSS) participates in ATP binding.

Heterodimer composed of a glutamine amidotransferase subunit (A) and a GMP-binding subunit (B).

It catalyses the reaction XMP + L-glutamine + ATP + H2O = GMP + L-glutamate + AMP + diphosphate + 2 H(+). It functions in the pathway purine metabolism; GMP biosynthesis; GMP from XMP (L-Gln route): step 1/1. Functionally, catalyzes the synthesis of GMP from XMP. The chain is GMP synthase [glutamine-hydrolyzing] subunit B from Methanococcus maripaludis (strain C7 / ATCC BAA-1331).